The chain runs to 247 residues: Sec-independent protein translocase protein TatC (247 aa).

A run of 5 helical transmembrane segments spans residues 21–41 (IILL…KPLI), 71–91 (AFII…WAFV), 109–129 (ITFL…FPFI), 154–174 (FLLQ…VIML), and 195–215 (FCLL…HLMI).

It belongs to the TatC family. Forms a complex with TatA.

It localises to the cell membrane. Part of the twin-arginine translocation (Tat) system that transports large folded proteins containing a characteristic twin-arginine motif in their signal peptide across membranes. This chain is Sec-independent protein translocase protein TatC, found in Listeria innocua serovar 6a (strain ATCC BAA-680 / CLIP 11262).